The following is a 164-amino-acid chain: Putative Cys-tRNA(Pro)/Cys-tRNA(Cys) deacylase EbsC (164 aa).

This sequence belongs to the prolyl-tRNA editing family. YbaK/EbsC subfamily.

Functionally, affects the expression of the receptor, named binding substance, that mediates mating aggregate formation. Could be a regulatory protein that suppresses the function or expression of ebsA and/or ebsMB. This Enterococcus faecalis (strain ATCC 700802 / V583) protein is Putative Cys-tRNA(Pro)/Cys-tRNA(Cys) deacylase EbsC.